Here is a 398-residue protein sequence, read N- to C-terminus: 1-deoxy-D-xylulose 5-phosphate reductoisomerase (398 aa).

8 residues coordinate NADPH: T10, G11, S12, V13, G36, K37, N38, and N124. K125 contacts 1-deoxy-D-xylulose 5-phosphate. E126 is a binding site for NADPH. D150 contacts Mn(2+). The 1-deoxy-D-xylulose 5-phosphate site is built by S151, E152, S186, and H209. Mn(2+) is bound at residue E152. An NADPH-binding site is contributed by G215. The 1-deoxy-D-xylulose 5-phosphate site is built by S222, N227, K228, and E231. E231 provides a ligand contact to Mn(2+).

Belongs to the DXR family. As to quaternary structure, homodimer. Mg(2+) is required as a cofactor. It depends on Mn(2+) as a cofactor.

The catalysed reaction is 2-C-methyl-D-erythritol 4-phosphate + NADP(+) = 1-deoxy-D-xylulose 5-phosphate + NADPH + H(+). It functions in the pathway isoprenoid biosynthesis; isopentenyl diphosphate biosynthesis via DXP pathway; isopentenyl diphosphate from 1-deoxy-D-xylulose 5-phosphate: step 1/6. Its function is as follows. Catalyzes the NADPH-dependent rearrangement and reduction of 1-deoxy-D-xylulose-5-phosphate (DXP) to 2-C-methyl-D-erythritol 4-phosphate (MEP). In Photorhabdus laumondii subsp. laumondii (strain DSM 15139 / CIP 105565 / TT01) (Photorhabdus luminescens subsp. laumondii), this protein is 1-deoxy-D-xylulose 5-phosphate reductoisomerase.